Reading from the N-terminus, the 185-residue chain is Threonylcarbamoyl-AMP synthase (185 aa).

In terms of domain architecture, YrdC-like spans 4 to 185 (SWRVQQAAQD…IATAQIVRAG (182 aa)).

This sequence belongs to the SUA5 family. TsaC subfamily.

The protein resides in the cytoplasm. It catalyses the reaction L-threonine + hydrogencarbonate + ATP = L-threonylcarbamoyladenylate + diphosphate + H2O. Functionally, required for the formation of a threonylcarbamoyl group on adenosine at position 37 (t(6)A37) in tRNAs that read codons beginning with adenine. Catalyzes the conversion of L-threonine, HCO(3)(-)/CO(2) and ATP to give threonylcarbamoyl-AMP (TC-AMP) as the acyladenylate intermediate, with the release of diphosphate. The protein is Threonylcarbamoyl-AMP synthase of Pseudomonas syringae pv. syringae (strain B728a).